The primary structure comprises 278 residues: Probable CCR4-associated factor 1 homolog 5 (278 aa).

The a divalent metal cation site is built by aspartate 30, glutamate 32, aspartate 145, and aspartate 217.

It belongs to the CAF1 family. Component of the CCR4-NOT complex, at least composed of CRR4 and CAF1 proteins. A divalent metal cation serves as cofactor.

The protein localises to the nucleus. Its subcellular location is the cytoplasm. It carries out the reaction Exonucleolytic cleavage of poly(A) to 5'-AMP.. Ubiquitous transcription factor required for a diverse set of processes. It is a component of the CCR4 complex involved in the control of gene expression. The polypeptide is Probable CCR4-associated factor 1 homolog 5 (CAF1-5) (Arabidopsis thaliana (Mouse-ear cress)).